The sequence spans 137 residues: Transcription antitermination protein NusB (137 aa).

The protein belongs to the NusB family.

Its function is as follows. Involved in transcription antitermination. Required for transcription of ribosomal RNA (rRNA) genes. Binds specifically to the boxA antiterminator sequence of the ribosomal RNA (rrn) operons. This is Transcription antitermination protein NusB from Actinobacillus pleuropneumoniae serotype 5b (strain L20).